The primary structure comprises 394 residues: MDKQHSKQRIVVGLSGGVDSAVTAYLLKQQGHEVIGIFMKNWEDDDDSEFCSSNIDFVDAAAVADVIGIEIEHVNFAANYKDRVFAEFLREYQAGRTPNPDILCNAEIKFKAFLDHAMRLGAEKIATGHYARVRQNEATGLHELLKGLDPSKDQSYFLHRLNQAQLSKTLFPVGELHKTEVRRIADEIGLPNARKKDSTGICFIGERPFRDFLNRYIAKAPGPVKNDQGRILGEHVGLSFYTLGQRQGLGIGGVKARGADLKAAQARGQRGVGEHEPWFVARKDMDSNTLWVVQGHDHPWLQSTLLNAQDCSWVAGSAPALGAMAAKTRYRQADAACELVSATAGGCELAFLDAQWAVTPGQSAVLYQGEVCLGGGVIASSNVQNLPGGKPAVA.

Residues Gly13–Ser20 and Met39 contribute to the ATP site. The tract at residues Asn99–Asp101 is interaction with target base in tRNA. Catalysis depends on Cys104, which acts as the Nucleophile. Cys104 and Cys202 are oxidised to a cystine. Gly128 is a binding site for ATP. An interaction with tRNA region spans residues Lys152–Gln154. Cys202 (cysteine persulfide intermediate) is an active-site residue. An interaction with tRNA region spans residues Arg329–Tyr330.

Belongs to the MnmA/TRMU family.

It is found in the cytoplasm. The catalysed reaction is S-sulfanyl-L-cysteinyl-[protein] + uridine(34) in tRNA + AH2 + ATP = 2-thiouridine(34) in tRNA + L-cysteinyl-[protein] + A + AMP + diphosphate + H(+). Its function is as follows. Catalyzes the 2-thiolation of uridine at the wobble position (U34) of tRNA, leading to the formation of s(2)U34. This is tRNA-specific 2-thiouridylase MnmA from Polaromonas naphthalenivorans (strain CJ2).